The primary structure comprises 165 residues: Large ribosomal subunit protein uL11A (165 aa).

Residue proline 2 is modified to N,N-dimethylproline; by NTM1. Lysine 4 and lysine 11 each carry N6,N6,N6-trimethyllysine; by RKM2. Residues serine 25 and serine 38 each carry the phosphoserine modification. Position 67 is an N5-methylarginine; by RMT2 (arginine 67). Glycyl lysine isopeptide (Lys-Gly) (interchain with G-Cter in ubiquitin) cross-links involve residues lysine 130 and lysine 146.

Belongs to the universal ribosomal protein uL11 family. In terms of assembly, component of the large ribosomal subunit (LSU). Mature yeast ribosomes consist of a small (40S) and a large (60S) subunit. The 40S small subunit contains 1 molecule of ribosomal RNA (18S rRNA) and 33 different proteins (encoded by 57 genes). The large 60S subunit contains 3 rRNA molecules (25S, 5.8S and 5S rRNA) and 46 different proteins (encoded by 81 genes). In terms of processing, it appears that the main modified species for L12 contains 6 methyl groups, 2 on Pro-2, 3 on Lys-4 and 1 on Arg-67. Although not reproduced with a second method, methylation at Lys-11 cannot be ruled out.

The protein localises to the cytoplasm. Its function is as follows. Component of the ribosome, a large ribonucleoprotein complex responsible for the synthesis of proteins in the cell. The small ribosomal subunit (SSU) binds messenger RNAs (mRNAs) and translates the encoded message by selecting cognate aminoacyl-transfer RNA (tRNA) molecules. The large subunit (LSU) contains the ribosomal catalytic site termed the peptidyl transferase center (PTC), which catalyzes the formation of peptide bonds, thereby polymerizing the amino acids delivered by tRNAs into a polypeptide chain. The nascent polypeptides leave the ribosome through a tunnel in the LSU and interact with protein factors that function in enzymatic processing, targeting, and the membrane insertion of nascent chains at the exit of the ribosomal tunnel. This is Large ribosomal subunit protein uL11A from Saccharomyces cerevisiae (strain ATCC 204508 / S288c) (Baker's yeast).